A 428-amino-acid chain; its full sequence is Trigger factor (428 aa).

Residues 166 to 250 (GDIVTFDFKG…IKNIKEKILP (85 aa)) enclose the PPIase FKBP-type domain.

The protein belongs to the FKBP-type PPIase family. Tig subfamily.

It localises to the cytoplasm. It catalyses the reaction [protein]-peptidylproline (omega=180) = [protein]-peptidylproline (omega=0). In terms of biological role, involved in protein export. Acts as a chaperone by maintaining the newly synthesized protein in an open conformation. Functions as a peptidyl-prolyl cis-trans isomerase. This Mycoplasma mycoides subsp. mycoides SC (strain CCUG 32753 / NCTC 10114 / PG1) protein is Trigger factor.